Consider the following 174-residue polypeptide: tRNA (cytidine(56)-2'-O)-methyltransferase (174 aa).

Residues L80, 105 to 109, and 123 to 130 contribute to the S-adenosyl-L-methionine site; these read GAEKV and ISNQPHSE.

The protein belongs to the aTrm56 family. Homodimer.

The protein resides in the cytoplasm. It catalyses the reaction cytidine(56) in tRNA + S-adenosyl-L-methionine = 2'-O-methylcytidine(56) in tRNA + S-adenosyl-L-homocysteine + H(+). Specifically catalyzes the AdoMet-dependent 2'-O-ribose methylation of cytidine at position 56 in tRNAs. The polypeptide is tRNA (cytidine(56)-2'-O)-methyltransferase (Metallosphaera sedula (strain ATCC 51363 / DSM 5348 / JCM 9185 / NBRC 15509 / TH2)).